Here is a 177-residue protein sequence, read N- to C-terminus: ATP synthase subunit delta (177 aa).

Belongs to the ATPase delta chain family. F-type ATPases have 2 components, F(1) - the catalytic core - and F(0) - the membrane proton channel. F(1) has five subunits: alpha(3), beta(3), gamma(1), delta(1), epsilon(1). F(0) has three main subunits: a(1), b(2) and c(10-14). The alpha and beta chains form an alternating ring which encloses part of the gamma chain. F(1) is attached to F(0) by a central stalk formed by the gamma and epsilon chains, while a peripheral stalk is formed by the delta and b chains.

It localises to the cell membrane. Functionally, f(1)F(0) ATP synthase produces ATP from ADP in the presence of a proton or sodium gradient. F-type ATPases consist of two structural domains, F(1) containing the extramembraneous catalytic core and F(0) containing the membrane proton channel, linked together by a central stalk and a peripheral stalk. During catalysis, ATP synthesis in the catalytic domain of F(1) is coupled via a rotary mechanism of the central stalk subunits to proton translocation. In terms of biological role, this protein is part of the stalk that links CF(0) to CF(1). It either transmits conformational changes from CF(0) to CF(1) or is implicated in proton conduction. The protein is ATP synthase subunit delta of Exiguobacterium sp. (strain ATCC BAA-1283 / AT1b).